A 567-amino-acid chain; its full sequence is Structural protein ORF567 (567 aa).

The tract at residues 7-393 is disordered; the sequence is INALLGFPEE…MPIEHKPEQQ (387 aa). The segment covering 65-79 has biased composition (pro residues); it reads TPTPIRPAPPPPPPI. Over residues 180-200 the composition is skewed to basic and acidic residues; sequence PKREPEHHTHGSTNNEHESKR. Over residues 219–231 the composition is skewed to low complexity; sequence THQTSPSHSSGGT. 2 stretches are compositionally biased toward pro residues: residues 253 to 278 and 285 to 299; these read MPIPPNPPIVREPTPTPQPTPIPTPP and TPTPPRTPQPTPPPT. Residues 300–312 are compositionally biased toward low complexity; sequence HGSSSTNSSGSTN. Residues 319–335 show a composition bias toward pro residues; that stretch reads PKPIPIPPTPPPPPPHH. The span at 343-353 shows a compositional bias: basic and acidic residues; that stretch reads PKHESEHHDHG. Residues 354-372 show a composition bias toward low complexity; sequence SSSTNSSSSTSNSSSGGTN.

The protein localises to the virion. The polypeptide is Structural protein ORF567 (Acidianus two-tailed virus (ATV)).